The following is a 79-amino-acid chain: Dolichyl-diphosphooligosaccharide--protein glycosyltransferase subunit TMEM258 (79 aa).

Position 1 is an N-acetylmethionine (Met-1). The Lumenal segment spans residues 1–16; the sequence is MELEAMSRYTSPVNPA. The helical transmembrane segment at 17-37 threads the bilayer; sequence VFPHLTVVLLAIGMFFTAWFF. The Cytoplasmic segment spans residues 38-54; sequence VYEVTSTKYTRDICKEL. Residues 55 to 75 form a helical membrane-spanning segment; that stretch reads LISLVASLFMGFGVLFLLLWV. Residues 76–79 lie on the Lumenal side of the membrane; sequence GIYV.

The protein belongs to the OST5 family. As to quaternary structure, component of the oligosaccharyltransferase (OST) complex. OST exists in two different complex forms which contain common core subunits RPN1, RPN2, OST48, OST4, DAD1 and TMEM258, either STT3A or STT3B as catalytic subunits, and form-specific accessory subunits. STT3A complex assembly occurs through the formation of 3 subcomplexes. Subcomplex 1 contains RPN1 and TMEM258, subcomplex 2 contains the STT3A-specific subunits STT3A, DC2/OSTC, and KCP2 as well as the core subunit OST4, and subcomplex 3 contains RPN2, DAD1, and OST48. The STT3A complex can form stable complexes with the Sec61 complex or with both the Sec61 and TRAP complexes.

It is found in the membrane. It localises to the endoplasmic reticulum. The protein resides in the cytoplasm. It functions in the pathway protein modification; protein glycosylation. In terms of biological role, subunit of the oligosaccharyl transferase (OST) complex that catalyzes the initial transfer of a defined glycan (Glc(3)Man(9)GlcNAc(2) in eukaryotes) from the lipid carrier dolichol-pyrophosphate to an asparagine residue within an Asn-X-Ser/Thr consensus motif in nascent polypeptide chains, the first step in protein N-glycosylation. N-glycosylation occurs cotranslationally and the complex associates with the Sec61 complex at the channel-forming translocon complex that mediates protein translocation across the endoplasmic reticulum (ER). All subunits are required for a maximal enzyme activity. This chain is Dolichyl-diphosphooligosaccharide--protein glycosyltransferase subunit TMEM258, found in Canis lupus familiaris (Dog).